A 247-amino-acid chain; its full sequence is MFFDVLTLFPGMFASPFADSIMGKAVKRGLVQITAHHLRDWAEGKHQITDDVPYGGGEGMVLKPEPVARALRDLRQRRPHSRVLLMTPQGKPFCQESARQLAGEESLVFVCGRYEGFDERIRSMVDDEFSLGDFVLTGGELAAMTIIDAVGRLVPGVLGNRDSAASDSYSDGLLEYAQYTRPAEFEGMKVPDVLLSGNHAAIARWRRQQQLLRTWLRRPDLLERACLSDEDRRMLQELQRQADSGEQ.

S-adenosyl-L-methionine is bound by residues Gly-112 and 131 to 136 (LGDFVL).

Belongs to the RNA methyltransferase TrmD family. In terms of assembly, homodimer.

The protein localises to the cytoplasm. It catalyses the reaction guanosine(37) in tRNA + S-adenosyl-L-methionine = N(1)-methylguanosine(37) in tRNA + S-adenosyl-L-homocysteine + H(+). In terms of biological role, specifically methylates guanosine-37 in various tRNAs. This chain is tRNA (guanine-N(1)-)-methyltransferase, found in Syntrophotalea carbinolica (strain DSM 2380 / NBRC 103641 / GraBd1) (Pelobacter carbinolicus).